A 425-amino-acid chain; its full sequence is uncharacterized protein (425 aa).

It to K.pneumoniae SorE.

This is an uncharacterized protein from Escherichia coli (strain K12).